The chain runs to 727 residues: Glycerol-3-phosphate dehydrogenase, mitochondrial (727 aa).

Residues 1–42 constitute a mitochondrion transit peptide; that stretch reads MAFQKAVKGTILVGGGALATVLGLSQFAHYRRKQMNLAYVKA. 71 to 99 provides a ligand contact to FAD; the sequence is DILVIGGGATGSGCALDAVTRGLKTALVE. Tyrosine 601 carries the phosphotyrosine modification. 2 consecutive EF-hand domains span residues 623-658 and 659-694; these read SDID…INVQ and MDEN…IQKG. Ca(2+) is bound by residues aspartate 672, asparagine 674, asparagine 676, glutamine 678, and glutamate 683.

Belongs to the FAD-dependent glycerol-3-phosphate dehydrogenase family. The cofactor is FAD.

The protein localises to the mitochondrion. It catalyses the reaction a quinone + sn-glycerol 3-phosphate = dihydroxyacetone phosphate + a quinol. It functions in the pathway polyol metabolism; glycerol degradation via glycerol kinase pathway; glycerone phosphate from sn-glycerol 3-phosphate (aerobic route): step 1/1. Calcium-binding enhance the activity of the enzyme. Its function is as follows. Calcium-responsive mitochondrial glycerol-3-phosphate dehydrogenase which seems to be a key component of the pancreatic beta-cell glucose-sensing device. The sequence is that of Glycerol-3-phosphate dehydrogenase, mitochondrial (GPD2) from Macaca fascicularis (Crab-eating macaque).